Here is a 243-residue protein sequence, read N- to C-terminus: Cell division protein ZipA (243 aa).

Residues 1 to 4 (MSDV) lie on the Periplasmic side of the membrane. Residues 5-25 (TLLRIGIAIVGILFVAAVFFF) form a helical membrane-spanning segment. Residues 26 to 243 (STPKTSAHRV…VPPLIKNSRW (218 aa)) are Cytoplasmic-facing. The segment at 32 to 89 (AHRVRTKKEEPPRERREPMLSTEADNSPPQGVDEVPASVSQQQVNPEANKPGEVQLGK) is disordered. Positions 38-49 (KKEEPPRERREP) are enriched in basic and acidic residues.

This sequence belongs to the ZipA family. As to quaternary structure, interacts with FtsZ via their C-terminal domains.

It is found in the cell inner membrane. Functionally, essential cell division protein that stabilizes the FtsZ protofilaments by cross-linking them and that serves as a cytoplasmic membrane anchor for the Z ring. Also required for the recruitment to the septal ring of downstream cell division proteins. The sequence is that of Cell division protein ZipA from Xylella fastidiosa (strain 9a5c).